A 418-amino-acid chain; its full sequence is F420-non-reducing hydrogenase vhu subunit A (418 aa).

Positions 61 and 64 each coordinate Ni(2+).

It belongs to the [NiFe]/[NiFeSe] hydrogenase large subunit family. The F420-non-reducing hydrogenase vhu is composed of four subunits; VhuA, VhuD, VhuG and VhuU. The cofactor is Ni(2+).

The sequence is that of F420-non-reducing hydrogenase vhu subunit A (vhuA) from Methanocaldococcus jannaschii (strain ATCC 43067 / DSM 2661 / JAL-1 / JCM 10045 / NBRC 100440) (Methanococcus jannaschii).